A 427-amino-acid chain; its full sequence is Glutamate-1-semialdehyde 2,1-aminomutase (427 aa).

An N6-(pyridoxal phosphate)lysine modification is found at Lys265.

This sequence belongs to the class-III pyridoxal-phosphate-dependent aminotransferase family. HemL subfamily. In terms of assembly, homodimer. Pyridoxal 5'-phosphate serves as cofactor.

The protein resides in the cytoplasm. It catalyses the reaction (S)-4-amino-5-oxopentanoate = 5-aminolevulinate. It participates in porphyrin-containing compound metabolism; protoporphyrin-IX biosynthesis; 5-aminolevulinate from L-glutamyl-tRNA(Glu): step 2/2. The protein is Glutamate-1-semialdehyde 2,1-aminomutase of Pseudomonas putida (strain GB-1).